The following is a 59-amino-acid chain: Large ribosomal subunit protein uL30 (59 aa).

The protein belongs to the universal ribosomal protein uL30 family. Part of the 50S ribosomal subunit.

This is Large ribosomal subunit protein uL30 from Bacillus subtilis (strain 168).